We begin with the raw amino-acid sequence, 734 residues long: Photosystem I P700 chlorophyll a apoprotein A2 (734 aa).

8 helical membrane-spanning segments follow: residues 46–69 (IFASHFGQLAIIFLWTSGNLFHVA), 135–158 (LYAGALFLLFLSVIFLIAGRLHLQ), 175–199 (LNHHLSGLFGVSSLAWTGHLVHVAI), 273–291 (MAHHHLAIAFVFSIAGHMY), 330–353 (LHFQLGLALASLGVITSLVAQHMY), 369–395 (AALYTHHQYIAGFIMTGAFAHGAIFLI), 417–439 (AIISHLSWVSLLLGFHTLGLYVH), and 517–535 (FLVHHAIALGLHTTTLILV). [4Fe-4S] cluster contacts are provided by Cys-559 and Cys-568. A run of 2 helical transmembrane segments spans residues 575 to 596 (AFYLAVFWMLNTIGWVTFYWHW) and 643 to 665 (LSVWAWMFLFGHLVWATGFMFLI). Chlorophyll a is bound by residues His-654, Met-662, and Tyr-670. Trp-671 contributes to the phylloquinone binding site. A helical transmembrane segment spans residues 707–727 (LVGLAHFSVGYIFTYAAFLIA).

The protein belongs to the PsaA/PsaB family. In terms of assembly, the PsaA/B heterodimer binds the P700 chlorophyll special pair and subsequent electron acceptors. PSI consists of a core antenna complex that captures photons, and an electron transfer chain that converts photonic excitation into a charge separation. The eukaryotic PSI reaction center is composed of at least 11 subunits. It depends on P700 is a chlorophyll a/chlorophyll a' dimer, A0 is one or more chlorophyll a, A1 is one or both phylloquinones and FX is a shared 4Fe-4S iron-sulfur center. as a cofactor.

The protein localises to the plastid. It localises to the chloroplast thylakoid membrane. The catalysed reaction is reduced [plastocyanin] + hnu + oxidized [2Fe-2S]-[ferredoxin] = oxidized [plastocyanin] + reduced [2Fe-2S]-[ferredoxin]. Its function is as follows. PsaA and PsaB bind P700, the primary electron donor of photosystem I (PSI), as well as the electron acceptors A0, A1 and FX. PSI is a plastocyanin-ferredoxin oxidoreductase, converting photonic excitation into a charge separation, which transfers an electron from the donor P700 chlorophyll pair to the spectroscopically characterized acceptors A0, A1, FX, FA and FB in turn. Oxidized P700 is reduced on the lumenal side of the thylakoid membrane by plastocyanin. This chain is Photosystem I P700 chlorophyll a apoprotein A2, found in Pinus koraiensis (Korean pine).